The primary structure comprises 91 residues: Small ribosomal subunit protein bS16 (91 aa).

The protein belongs to the bacterial ribosomal protein bS16 family.

The polypeptide is Small ribosomal subunit protein bS16 (Limosilactobacillus fermentum (strain NBRC 3956 / LMG 18251) (Lactobacillus fermentum)).